The sequence spans 256 residues: tRNA-cytidine(32) 2-sulfurtransferase (256 aa).

A PP-loop motif motif is present at residues 35 to 40; the sequence is SGGKDS. Residues Cys-110, Cys-113, and Cys-201 each contribute to the [4Fe-4S] cluster site.

This sequence belongs to the TtcA family. Homodimer. Mg(2+) is required as a cofactor. [4Fe-4S] cluster serves as cofactor.

The protein resides in the cytoplasm. It carries out the reaction cytidine(32) in tRNA + S-sulfanyl-L-cysteinyl-[cysteine desulfurase] + AH2 + ATP = 2-thiocytidine(32) in tRNA + L-cysteinyl-[cysteine desulfurase] + A + AMP + diphosphate + H(+). The protein operates within tRNA modification. Catalyzes the ATP-dependent 2-thiolation of cytidine in position 32 of tRNA, to form 2-thiocytidine (s(2)C32). The sulfur atoms are provided by the cysteine/cysteine desulfurase (IscS) system. The polypeptide is tRNA-cytidine(32) 2-sulfurtransferase (Coxiella burnetii (strain Dugway 5J108-111)).